A 565-amino-acid polypeptide reads, in one-letter code: uncharacterized protein (565 aa).

The next 5 helical transmembrane spans lie at 4–26 (FVQFLGSNPYILLFLTIGLAVWV), 33–55 (GYGLGAVAAAIVVGCLVATVGAA), 68–90 (SLLYYLFMYGVGLRVGPSFVNAL), 97–119 (YAILAIIAPILGLAIVVLGTQFF), and 162–184 (ISAMIALSYGITYIWGTVGIILL). RCK C-terminal domains follow at residues 210 to 295 (PNVD…LGPE) and 296 to 379 (VPDA…IFGV). Transmembrane regions (helical) follow at residues 389–411 (LLTLSFGMILGFLIGLIEVPAFG), 415–432 (GLGNAGGLLLSGIIVSSI), 453–472 (LGLIGFVAIVGINAGADLLT), 482–504 (IFIVGFLASTIPPIIVWAIGFHI), and 539–561 (WLGFPVGYAVSGVLLTVFGYFAM).

It belongs to the AAE transporter (TC 2.A.81) family.

It is found in the cell membrane. This is an uncharacterized protein from Bordetella bronchiseptica (strain ATCC BAA-588 / NCTC 13252 / RB50) (Alcaligenes bronchisepticus).